Consider the following 209-residue polypeptide: Probable GTP-binding protein EngB (209 aa).

One can recognise an EngB-type G domain in the interval Thr-22 to Ala-198. Mg(2+)-binding residues include Ser-37 and Thr-59.

Belongs to the TRAFAC class TrmE-Era-EngA-EngB-Septin-like GTPase superfamily. EngB GTPase family. Requires Mg(2+) as cofactor.

In terms of biological role, necessary for normal cell division and for the maintenance of normal septation. The protein is Probable GTP-binding protein EngB of Neisseria gonorrhoeae.